A 205-amino-acid polypeptide reads, in one-letter code: Proteasome subunit beta type-3 (205 aa).

S31 is modified (phosphoserine). Residue K70 forms a Glycyl lysine isopeptide (Lys-Gly) (interchain with G-Cter in ubiquitin) linkage.

This sequence belongs to the peptidase T1B family. In terms of assembly, the 26S proteasome consists of a 20S proteasome core and two 19S regulatory subunits. The 20S proteasome core is composed of 28 subunits that are arranged in four stacked rings, resulting in a barrel-shaped structure. The two end rings are each formed by seven alpha subunits, and the two central rings are each formed by seven beta subunits. The catalytic chamber with the active sites is on the inside of the barrel.

Its subcellular location is the cytoplasm. It is found in the nucleus. Non-catalytic component of the proteasome which degrades poly-ubiquitinated proteins in the cytoplasm and in the nucleus. It is essential for the regulated turnover of proteins and for the removal of misfolded proteins. The proteasome is a multicatalytic proteinase complex that is characterized by its ability to cleave peptides with Arg, Phe, Tyr, Leu, and Glu adjacent to the leaving group at neutral or slightly basic pH. It has an ATP-dependent proteolytic activity. This subunit may participate in the trypsin-like activity of the enzyme complex. This Saccharomyces cerevisiae (strain ATCC 204508 / S288c) (Baker's yeast) protein is Proteasome subunit beta type-3 (PUP3).